Consider the following 347-residue polypeptide: Metacaspase-2 (347 aa).

The tract at residues 1 to 70 (MCSLITQLCD…QPWVATPLPG (70 aa)) is regulates substrate access to the active site. The active site involves histidine 158. The Ca(2+) site is built by aspartate 173, aspartate 189, and aspartate 190. Cysteine 213 is a catalytic residue. Residue aspartate 220 participates in Ca(2+) binding.

Belongs to the peptidase C14B family. In terms of assembly, monomer. Post-translationally, auto-proteolytic cleavage of the propeptide after Lys-55 and between the large and small subunits after Lys-268 is required for catalytic activity towards large protein substrates but is dispensable towards small oligopeptide substrates. After processing, the propeptide and the large and small subunits remain associated by non-covalent bonds. In vivo, the unprocessed enzyme appears to be the predominant form.

The protein resides in the recycling endosome. With respect to regulation, activated by Ca(2+). In response to calcium binding, the 280-loop, the 280-loop, a disordered loop consisting of residues 269-275, undergoes a conformational change which stabilizes substrates in the active site. The binding to the substrate triggers the release of the N-terminal region resulting in the activation of the enzyme. Proteolytic cleavage is required for catalytic activity towards large protein substrates. In terms of biological role, cysteine protease that cleaves specifically after arginine or lysine residues. This chain is Metacaspase-2, found in Trypanosoma brucei brucei.